The primary structure comprises 491 residues: Peptidoglycan D,D-transpeptidase PbpA (491 aa).

The Cytoplasmic portion of the chain corresponds to 1–8 (MNTSLRRV). A helical; Signal-anchor for type II membrane protein transmembrane segment spans residues 9–29 (AVAIMVLIVLLLANATVTQVF). At 30–491 (AADGLRADPR…TIAAALREGS (462 aa)) the chain is on the periplasmic side. The interval 160–484 (GSVVALEPST…AAPIGRATIA (325 aa)) is transpeptidase. The active-site Acyl-ester intermediate is serine 222.

It belongs to the transpeptidase family.

It is found in the cell inner membrane. It catalyses the reaction Preferential cleavage: (Ac)2-L-Lys-D-Ala-|-D-Ala. Also transpeptidation of peptidyl-alanyl moieties that are N-acyl substituents of D-alanine.. Its pathway is cell wall biogenesis; peptidoglycan biosynthesis. In terms of biological role, transpeptidase that catalyzes cross-linking of the peptidoglycan cell wall. Required for the regulation of cell length. In Mycolicibacterium smegmatis (strain ATCC 700084 / mc(2)155) (Mycobacterium smegmatis), this protein is Peptidoglycan D,D-transpeptidase PbpA (pbpA).